The primary structure comprises 519 residues: Galactose-1-phosphate uridylyltransferase (519 aa).

It belongs to the galactose-1-phosphate uridylyltransferase type 2 family.

Its subcellular location is the cytoplasm. The enzyme catalyses alpha-D-galactose 1-phosphate + UDP-alpha-D-glucose = alpha-D-glucose 1-phosphate + UDP-alpha-D-galactose. It participates in carbohydrate metabolism; galactose metabolism. The chain is Galactose-1-phosphate uridylyltransferase from Caldanaerobacter subterraneus subsp. tengcongensis (strain DSM 15242 / JCM 11007 / NBRC 100824 / MB4) (Thermoanaerobacter tengcongensis).